The following is a 351-amino-acid chain: Quinolinate phosphoribosyltransferase [decarboxylating] 2a, mitochondrial (351 aa).

Substrate is bound by residues R142, 173–175, R197, K207, E240, D267, 299–301, and 320–322; these read TRK, SGN, and SGA.

Belongs to the NadC/ModD family. As to expression, expressed in roots and flowers.

The protein localises to the mitochondrion. The catalysed reaction is nicotinate beta-D-ribonucleotide + CO2 + diphosphate = quinolinate + 5-phospho-alpha-D-ribose 1-diphosphate + 2 H(+). Its pathway is alkaloid biosynthesis; nicotine biosynthesis. The protein operates within cofactor biosynthesis; NAD(+) biosynthesis; nicotinate D-ribonucleotide from quinolinate: step 1/1. Its function is as follows. Involved in the biosynthesis of pyridine alkaloid natural products, leading mainly to the production of anabasine, anatabine, nicotine and nornicotine, effective deterrents against herbivores with antiparasitic and pesticide properties (neurotoxins); nornicotine serves as the precursor in the synthesis of the carcinogen compound N'-nitrosonornicotine (NNN). Involved in the catabolism of quinolinic acid (QA). This is Quinolinate phosphoribosyltransferase [decarboxylating] 2a, mitochondrial from Nicotiana tabacum (Common tobacco).